A 328-amino-acid polypeptide reads, in one-letter code: Beta-ketoacyl-[acyl-carrier-protein] synthase III (328 aa).

Residues C122 and H255 contribute to the active site. An ACP-binding region spans residues 256 to 260 (QANVR). Residue N285 is part of the active site.

This sequence belongs to the thiolase-like superfamily. FabH family. Homodimer.

It is found in the cytoplasm. The enzyme catalyses malonyl-[ACP] + acetyl-CoA + H(+) = 3-oxobutanoyl-[ACP] + CO2 + CoA. It functions in the pathway lipid metabolism; fatty acid biosynthesis. Catalyzes the condensation reaction of fatty acid synthesis by the addition to an acyl acceptor of two carbons from malonyl-ACP. Catalyzes the first condensation reaction which initiates fatty acid synthesis and may therefore play a role in governing the total rate of fatty acid production. Possesses both acetoacetyl-ACP synthase and acetyl transacylase activities. Its substrate specificity determines the biosynthesis of branched-chain and/or straight-chain of fatty acids. In Bordetella pertussis (strain Tohama I / ATCC BAA-589 / NCTC 13251), this protein is Beta-ketoacyl-[acyl-carrier-protein] synthase III.